The chain runs to 257 residues: Cyclin-C1-1 (257 aa).

The protein belongs to the cyclin family. Cyclin C subfamily.

This is Cyclin-C1-1 from Oryza sativa subsp. japonica (Rice).